A 196-amino-acid chain; its full sequence is Late protein I196L (196 aa).

Repeat copies occupy residues 28–48 and 49–70. One copy of the 3; approximate repeat lies at 71-92; sequence SNYLTSAISTNISDKEEDTPFS.

The protein belongs to the asfivirus I196L family.

The polypeptide is Late protein I196L (African swine fever virus (isolate Warthog/Namibia/Wart80/1980) (ASFV)).